The chain runs to 1170 residues: MMNKSNFEFLKGVNDFTYAIACAAENNYPDDPNTTLIKMRMFGEATAKHLGLLLNIPPCENQHDLLRELGKIAFVDDNILSVFHKLRRIGNQAVHEYHNDLNDAQMCLRLGFRLAVWYYRLVTKDYDFPVPVFVLPERGENLYHQEVLTLKQQLEQQVREKAQTQAEVEAQQQKLVALNGYIAILEGKQQETEAQTQARLAALEAQLAEKNAELAKQTEQERKAYHKEITDQAIKRTLNLSEEESRFLIDAQLRKAGWQADSKTLRFSKGARPEPGVNKAIAEWPTGKDETGNQGFADYVLFVGLKPIAVVEAKRNNIDVPARLNESYRYSKCFDNGFLRETLLEHYSPDEVHEAVPEYETSWQDTSGKQRFKIPFCYSTNGREYRATMKTKSGIWYRDVRDTRNMSKALPEWHRPEELLEMLGSEPQKQNQWFADNPGMSELGLRYYQEDAVRAVEKAIVKGQQEILLAMATGTGKTRTAIAMMFRLIQSQRFKRILFLVDRRSLGEQALGAFEDTRINGDTFNSIFDIKGLTDKFPEDSTKIHVATVQSLVKRTLQSDEPMPVARYDCIVVDEAHRGYILDKEQTEGELQFRSQLDYVSAYRRILDHFDAVKIALTATPALHTVQIFGEPVYRYTYRTAVIDGFLIDQDPPIQIITRNAQEGVYLSKGEQVERISPQGEVINDTLEDDQDFEVADFNRGLVIPAFNRAVCNELTNYLDPTGSQKTLVFCVTNAHADMVVEELRAAFKKKYPQLEHDAIIKITGDADKDARKVQTMITRFNKERLPNIVVTVDLLTTGVDIPSICNIVFLRKVRSRILYEQMKGRATRLCPEVNKTSFKIFDCVDIYSTLESVDTMRPVVVRPKVELQTLVNEITDSETYKITEADGRSFAEHSHEQLVAKLQRIIGLATFNRDRSETIDKQVRRLDELCQDAAGVNFNGFASRLREKGPHWSAEVFNKLPGFIARLEKLKTDINNLNDAPIFLDIDDEVVSVKSLYGDYDTPQDFLEAFDSLVQRSPNAQPALQAVINRPRDLTRKGLVELQEWFDRQHFEESSLRKAWKETRNEDIAARLIGHIRRAAVGDALKPFEERVDHALTRIKGENDWSSEQLSWLDRLAQALKEKVVLDDDVFKTGNFHRRGGKAMLQRTFDDNLDTLLGKFSDYIWDELA.

The stretch at 143–229 (YHQEVLTLKQ…QERKAYHKEI (87 aa)) forms a coiled coil. The H-T-H motif DNA-binding region spans 431-450 (NQWFADNPGMSELGLRYYQE). The Helicase ATP-binding domain maps to 458–639 (KAIVKGQQEI…GEPVYRYTYR (182 aa)). 472 to 478 (ATGTGKT) is an ATP binding site. The DEAH box signature appears at 574-577 (DEAH). One can recognise a Helicase C-terminal domain in the interval 714-879 (ELTNYLDPTG…TLVNEITDSE (166 aa)).

Belongs to the HsdR family. The type I restriction/modification system is composed of three polypeptides R, M and S. The restriction enzyme has stoichiometry R(2)M(2)S(1). The methyltransferase is composed of M(2)S(1). As to quaternary structure, (Microbial infection) Interacts with Escherichia phage T7 protein Ocr; this interaction leads to the inhibition of the type I bifunctional endonuclease and methyltransferase restriction enzyme R.EcoKI composed of R(2)M(2)S(1). Upon purification after overexpression about one-third has the initiating methionine removed.

It carries out the reaction Endonucleolytic cleavage of DNA to give random double-stranded fragments with terminal 5'-phosphates, ATP is simultaneously hydrolyzed.. In terms of biological role, the subtype A restriction (R) subunit of a type I restriction enzyme that recognizes 5'-AACN(6)GTGC-3' and cleaves a random distance away. The R subunit is required for both endonuclease and ATPase activities but not for modification. Has endonucleolytic activity that requires Mg(2+), ATP and S-adenosyl-L-methionine (SAM); ATP can be replaced by dATP, no tested molecule could substitute for SAM. Generates double-stranded DNA with no nicks, by cutting one strand then the other within a few seconds. Cleaves only non-methylated DNA, hemi-methylated and fully methylated DNA are not substrates. After locating a non-methylated recognition site, the enzyme complex serves as a molecular motor that translocates DNA in an ATP-dependent manner until a collision occurs that triggers cleavage. The chain is Type I restriction enzyme EcoKI endonuclease subunit from Escherichia coli (strain K12).